An 899-amino-acid polypeptide reads, in one-letter code: Androgen receptor (899 aa).

Residues 1–537 (MEVQLGLGRV…PIDYYFPPQK (537 aa)) are modulating. The interaction with ZNF318 stretch occupies residues 1-566 (MEVQLGLGRV…GSCKVFFKRA (566 aa)). 2 disordered regions span residues 35–146 (QNPG…LSLL) and 175–222 (QQQQ…LGGN). At serine 61 the chain carries Phosphoserine; by CDK9. Residue serine 75 is modified to Phosphoserine. Low complexity-rich tracts occupy residues 94–103 (QPSQQQAASE) and 175–193 (QQQQQQQHQQQHQQHQQQQ). The span at 210 to 222 (APSSSKDSYLGGN) shows a compositional bias: polar residues. Tyrosine 218 is modified (phosphotyrosine; by CSK). Serine 251 carries the phosphoserine modification. At tyrosine 262 the chain carries Phosphotyrosine; by CSK and TNK2. Tyrosine 302, tyrosine 341, tyrosine 352, and tyrosine 357 each carry phosphotyrosine; by CSK. Tyrosine 358 is subject to Phosphotyrosine; by CSK and TNK2. Lysine 381 is covalently cross-linked (Glycyl lysine isopeptide (Lys-Gly) (interchain with G-Cter in SUMO)). Tyrosine 388 is subject to Phosphotyrosine; by CSK. Positions 436–471 (EGQLYGPGGGGGSSSPSDAGPVAPYGYTRPPQGLTS) are disordered. A Glycyl lysine isopeptide (Lys-Gly) (interchain with G-Cter in SUMO) cross-link involves residue lysine 500. Phosphotyrosine; by CSK is present on residues tyrosine 514 and tyrosine 531. The interval 531-898 (YYFPPQKTCL…GKVKPIYFHT (368 aa)) is interaction with LPXN. Positions 538–611 (TCLICGDEAS…AGMTLGARKL (74 aa)) form a DNA-binding region, nuclear receptor. 2 NR C4-type zinc fingers span residues 539 to 559 (CLICGDEASGCHYGALTCGSC) and 575 to 599 (CASRNDCTIDKFRRKNCPSCRLRKC). Positions 551-641 (YGALTCGSCK…TEDPSQKMTV (91 aa)) are interaction with HIPK3. Residues 571–898 (QKYLCASRND…GKVKPIYFHT (328 aa)) form an interaction with CCAR1 region. The interval 604–898 (MTLGARKLKK…GKVKPIYFHT (295 aa)) is interaction with KAT7. Serine 630 carries the post-translational modification Phosphoserine. The region spanning 648 to 879 (ECQPIFLNVL…DFPEMMAEII (232 aa)) is the NR LBD domain. 17beta-hydroxy-5alpha-androstan-3-one contacts are provided by asparagine 685 and arginine 732. Glycyl lysine isopeptide (Lys-Gly) (interchain with G-Cter in ubiquitin) cross-links involve residues lysine 825 and lysine 827. Threonine 857 serves as a coordination point for 17beta-hydroxy-5alpha-androstan-3-one. The residue at position 895 (tyrosine 895) is a Phosphotyrosine; by CSK.

This sequence belongs to the nuclear hormone receptor family. NR3 subfamily. In terms of assembly, binds DNA as a homodimer. Part of a ternary complex containing AR, EFCAB6/DJBP and PARK7. Interacts with HIPK3 and NR0B2 in the presence of androgen. The ligand binding domain interacts with KAT7/HBO1 in the presence of dihydrotestosterone. Interacts with EFCAB6/DJBP, PQBP1, RANBP9, SPDEF, SRA1, TGFB1I1, ZNF318 and RREB1. The AR N-terminal poly-Gln region binds Ran resulting in enhancement of AR-mediated transactivation. Ran-binding decreases as the poly-Gln length increases. Interacts with ZMIZ1/ZIMP10 and ZMIZ2/ZMIP7 which both enhance its transactivation activity. Interacts with RBAK. Interacts via the ligand-binding domain with LXXLL and FXXLF motifs from NCOA1, NCOA2, NCOA3 and MAGEA11. Interacts (via nuclear receptor DNA binding domain and nuclear receptor ligand binding domain) with NCOA4. Interacts with HIP1 (via coiled coil domain). Interacts with SLC30A9 and RAD54L2/ARIP4. Interacts with MACROD1 (via macro domain). Interacts (via ligand-binding domain) with TRIM68. Interacts with TNK2. Interacts with USP26. Interacts with RNF6. Interacts (regulated by RNF6 probably through polyubiquitination) with RNF14; regulates AR transcriptional activity. Interacts with PRMT2 and TRIM24. Interacts with RACK1. Interacts with RANBP10; this interaction enhances hormone-induced AR transcriptional activity. Interacts with PRPF6 in a hormone-independent way; this interaction enhances hormone-induced AR transcriptional activity. Interacts with STK4/MST1. Interacts with ZIPK/DAPK3. Interacts with LPXN. Interacts with MAK. Part of a complex containing AR, MAK and NCOA3. Interacts with CRY1. Interacts with CCAR1 and GATA2. Interacts with BUD31. Interacts with ARID4A. Interacts with ARID4B. Interacts (via NR LBD domain) with ZBTB7A; the interaction is direct and androgen-dependent. Interacts with NCOR1. Interacts with NCOR2. Interacts with CRY2 in a ligand-dependent manner. Post-translationally, phosphorylated in prostate cancer cells in response to several growth factors including EGF. Phosphorylation is induced by c-Src kinase (CSK). Tyr-514 is one of the major phosphorylation sites and an increase in phosphorylation and Src kinase activity is associated with prostate cancer progression. Phosphorylation by TNK2 enhances the DNA-binding and transcriptional activity. Phosphorylation at Ser-61 by CDK9 regulates AR promoter selectivity and cell growth. Phosphorylation by PAK6 leads to AR-mediated transcription inhibition. Sumoylated on Lys-381 (major) and Lys-500. Ubiquitinated. Deubiquitinated by USP26. 'Lys-6' and 'Lys-27'-linked polyubiquitination by RNF6 modulates AR transcriptional activity and specificity. In terms of processing, palmitoylated by ZDHHC7 and ZDHHC21. Palmitoylation is required for plasma membrane targeting and for rapid intracellular signaling via ERK and AKT kinases and cAMP generation.

It is found in the nucleus. It localises to the cytoplasm. In terms of biological role, steroid hormone receptors are ligand-activated transcription factors that regulate eukaryotic gene expression and affect cellular proliferation and differentiation in target tissues. Transcription factor activity is modulated by bound coactivator and corepressor proteins like ZBTB7A that recruits NCOR1 and NCOR2 to the androgen response elements/ARE on target genes, negatively regulating androgen receptor signaling and androgen-induced cell proliferation. Transcription activation is also down-regulated by NR0B2. Activated, but not phosphorylated, by HIPK3 and ZIPK/DAPK3. The protein is Androgen receptor (Ar) of Mus musculus (Mouse).